Here is a 418-residue protein sequence, read N- to C-terminus: FXa-directed anticoagulant (418 aa).

The signal sequence occupies residues 1–19 (MNLKIAIIVICQLVYFTQG). N-linked (GlcNAc...) asparagine glycosylation is found at N117, N167, and N286.

The protein belongs to the serpin family. In terms of assembly, interacts with host coagulation factor X/F10 (activated). Female salivary gland (at protein level).

The protein resides in the secreted. Its function is as follows. Anticoagulant and antithrombotic serpin-type protein inhibiting host coagulation factor Xa (F10). Does not inhibit host uPA/urokinase-type plasminogen activator (PLAU), kallikrein, granzyme B (GZMB), matriptase, elastase, alpha-chymotrypsin, chymase, coagulation factor XIIa (F12), coagulation factor XIa (F11), plasmin (PLG), thrombin (F2), trypsin and cathepsin G (CTSG). Inhibits factor Xa-induced production of pro-inflammatory cytokines, such as MCP-1/CCL2, TNF-alpha/TNF, IL-1beta/IL1B, IL6, IL8/CXCL8 and IL18, in human endothelial cells. Inhibits factor Xa-induced up-regulation of protease-activated receptors (PARs) F2R, F2RL1 and F2RL2 in human endothelial cells. Prevents activation of host F2RL1 via inhibition of F2RL1 cleavage by host factor Xa. Inhibits factor Xa-induced up-regulation of adhesion molecules ICAM1 and VCAM1 in human endothelial cells. Inhibits factor Xa-induced up-regulation of phosphorylated ERK1/2 in human endothelial cells. Inhibits factor Xa-induced activation of transcription factor NF-kappa-B in human endothelial cells. Reduces factor Xa-induced edema in the host. Reduces factor Xa-induced endothelial permeability in the host. The chain is FXa-directed anticoagulant from Aedes albopictus (Asian tiger mosquito).